A 287-amino-acid polypeptide reads, in one-letter code: Small ribosomal subunit protein uS2 (287 aa).

Over residues 254–277 (LASATASATPSATASTTALTDAPA) the composition is skewed to low complexity. The interval 254-287 (LASATASATPSATASTTALTDAPAGATEPTTDAS) is disordered.

This sequence belongs to the universal ribosomal protein uS2 family.

The sequence is that of Small ribosomal subunit protein uS2 (rpsB) from Mycobacterium tuberculosis (strain CDC 1551 / Oshkosh).